Reading from the N-terminus, the 423-residue chain is GTPase HflX (423 aa).

The Hflx-type G domain occupies 201–363 (IQLALVGYTN…KIEQALKGMM (163 aa)). GTP contacts are provided by residues 207–214 (GYTNAGKS), 232–236 (FATLD), 254–257 (DTVG), 320–323 (NKAD), and 341–343 (SAY). Mg(2+)-binding residues include Ser-214 and Thr-234.

This sequence belongs to the TRAFAC class OBG-HflX-like GTPase superfamily. HflX GTPase family. In terms of assembly, monomer. Associates with the 50S ribosomal subunit. It depends on Mg(2+) as a cofactor.

It localises to the cytoplasm. Functionally, GTPase that associates with the 50S ribosomal subunit and may have a role during protein synthesis or ribosome biogenesis. This Alkalihalophilus pseudofirmus (strain ATCC BAA-2126 / JCM 17055 / OF4) (Bacillus pseudofirmus) protein is GTPase HflX.